Here is a 200-residue protein sequence, read N- to C-terminus: Large ribosomal subunit protein uL4 (200 aa).

A disordered region spans residues 45–64 (QKTRAEVSGGGIKPWRQKGT).

Belongs to the universal ribosomal protein uL4 family. As to quaternary structure, part of the 50S ribosomal subunit.

In terms of biological role, one of the primary rRNA binding proteins, this protein initially binds near the 5'-end of the 23S rRNA. It is important during the early stages of 50S assembly. It makes multiple contacts with different domains of the 23S rRNA in the assembled 50S subunit and ribosome. Functionally, forms part of the polypeptide exit tunnel. The chain is Large ribosomal subunit protein uL4 from Psychrobacter cryohalolentis (strain ATCC BAA-1226 / DSM 17306 / VKM B-2378 / K5).